Here is a 229-residue protein sequence, read N- to C-terminus: MDGNHRFTPDSKEFNTVVKSKESSTGRNPYQTPPLEHNGTHHQTNYSRKKTNLAIIISNFLSEISRPLSNGKINNSTHNILKFLNEVLKRSKCSKENAVLATFYFQKIHQSRGVRDESSLPEFSHCSRRIFLCCLILSHKFLNDNTYSMKNWQIISGLHAKDLSLMERWCLGKLNYELAIPYDEFLLWETNTLMKAKLRVGTPANAPVKRPRESDNDYDANSWKQIKSC.

The segment covering 1–24 has biased composition (basic and acidic residues); the sequence is MDGNHRFTPDSKEFNTVVKSKESS. A disordered region spans residues 1–46; that stretch reads MDGNHRFTPDSKEFNTVVKSKESSTGRNPYQTPPLEHNGTHHQTNY.

The protein belongs to the cyclin family. PCL1,2 subfamily. As to quaternary structure, forms a cyclin-CDK complex with PHO85.

Cyclin partner of the cyclin-dependent kinase (CDK) PHO85. Positively controls degradation of transcription factor GCN4 under favorable growth conditions. The PCL5-PHO85 cyclin-CDK holoenzyme phosphorylates GCN4, which is required for its degradation by the E3 ubiquitin ligase complex SCF(Cdc4). Amino acid starvation reduces PCL5-PHO85-associated GCN4 kinase activity and leads to stabilization of GCN4. The chain is PHO85 cyclin-5 (PCL5) from Saccharomyces cerevisiae (strain ATCC 204508 / S288c) (Baker's yeast).